A 554-amino-acid chain; its full sequence is NADH-quinone oxidoreductase subunit N 3 (554 aa).

Helical transmembrane passes span 35–55, 65–85, 105–125, 161–181, 187–207, 222–242, 275–295, 322–342, 345–365, 371–391, 398–418, 442–462, 476–496, and 525–545; these read LMPVLIIVVAAVLGILVEAFV, LFLTVVAVAGSFAAIVGLAAG, PTLFLQGTILLVAMVALFTFA, GFTTTEVFPLLLFSVAGLLVF, LLTLFIALEVFSLPLYLLCAV, YFLLGAFSSAFLLFGIALLYG, ALLLIGGAMILTGLLFKVGAV, VAAFGALLRLLYVALPGLAWD, PVMWAVAIVTMLGGAIVAITQ, LLAYSSIAHAGFILAGVIAAS, VLFYLLAYSFVTVGAFAVVTL, VAAVFAVFLLAFAGIPLTSGF, GAGALVVVGVLSSAVAAFFYI, and IAVGVAVTLVLGLAPQYFLDL.

The protein belongs to the complex I subunit 2 family. In terms of assembly, NDH-1 is composed of 14 different subunits. Subunits NuoA, H, J, K, L, M, N constitute the membrane sector of the complex.

The protein resides in the cell membrane. The catalysed reaction is a quinone + NADH + 5 H(+)(in) = a quinol + NAD(+) + 4 H(+)(out). In terms of biological role, NDH-1 shuttles electrons from NADH, via FMN and iron-sulfur (Fe-S) centers, to quinones in the respiratory chain. The immediate electron acceptor for the enzyme in this species is believed to be a menaquinone. Couples the redox reaction to proton translocation (for every two electrons transferred, four hydrogen ions are translocated across the cytoplasmic membrane), and thus conserves the redox energy in a proton gradient. The sequence is that of NADH-quinone oxidoreductase subunit N 3 from Streptomyces griseus subsp. griseus (strain JCM 4626 / CBS 651.72 / NBRC 13350 / KCC S-0626 / ISP 5235).